We begin with the raw amino-acid sequence, 350 residues long: Protein RecA (350 aa).

An ATP-binding site is contributed by 65-72; that stretch reads GPESSGKT. The segment at 329–350 is disordered; it reads ASPDVKANPVKETEDDMADADI. The span at 341–350 shows a compositional bias: acidic residues; that stretch reads TEDDMADADI.

This sequence belongs to the RecA family.

It localises to the cytoplasm. Functionally, can catalyze the hydrolysis of ATP in the presence of single-stranded DNA, the ATP-dependent uptake of single-stranded DNA by duplex DNA, and the ATP-dependent hybridization of homologous single-stranded DNAs. It interacts with LexA causing its activation and leading to its autocatalytic cleavage. This Pseudomonas fluorescens (strain ATCC BAA-477 / NRRL B-23932 / Pf-5) protein is Protein RecA.